A 477-amino-acid polypeptide reads, in one-letter code: Glycogen synthase (477 aa).

Lysine 15 serves as a coordination point for ADP-alpha-D-glucose.

Belongs to the glycosyltransferase 1 family. Bacterial/plant glycogen synthase subfamily.

The catalysed reaction is [(1-&gt;4)-alpha-D-glucosyl](n) + ADP-alpha-D-glucose = [(1-&gt;4)-alpha-D-glucosyl](n+1) + ADP + H(+). It participates in glycan biosynthesis; glycogen biosynthesis. Functionally, synthesizes alpha-1,4-glucan chains using ADP-glucose. The chain is Glycogen synthase from Cronobacter sakazakii (strain ATCC BAA-894) (Enterobacter sakazakii).